Consider the following 217-residue polypeptide: Probable septum site-determining protein MinC (217 aa).

This sequence belongs to the MinC family. In terms of assembly, interacts with MinD and FtsZ.

Functionally, cell division inhibitor that blocks the formation of polar Z ring septums. Rapidly oscillates between the poles of the cell to destabilize FtsZ filaments that have formed before they mature into polar Z rings. Prevents FtsZ polymerization. The protein is Probable septum site-determining protein MinC of Pelotomaculum thermopropionicum (strain DSM 13744 / JCM 10971 / SI).